The chain runs to 319 residues: MTYARIQGVGSYIPQQILSNADLEKMVNTTDEWIMQRVGVRERHVIANSPDNTTTMAVDAAKRAIEMAGIDPAVIDMIIVGTATAEYYFPSTACLVQKHLNLREDIPAFDINGACAGFVYALSIADQYIRNGGAKHILVIGVDSLTKVVDWKDRSTCILFGDGAGAVILQAHKEPGILNTILHANGDYSDLITAKSGVWERESVPHLHMYGKEVFKLAVTKLGEIVDEIIEKSGLKQSDIDWLIPHQANLRIIEATAKRLGLPRERVILTIEQHGNTSAASIPLALDAAVRAGKIKRGDTLLLEAFGAGLAWGAALLKL.

Residues C115 and H246 contribute to the active site. The segment at 247 to 251 is ACP-binding; it reads QANLR. The active site involves N276.

The protein belongs to the thiolase-like superfamily. FabH family. As to quaternary structure, homodimer.

The protein localises to the cytoplasm. It catalyses the reaction malonyl-[ACP] + acetyl-CoA + H(+) = 3-oxobutanoyl-[ACP] + CO2 + CoA. It participates in lipid metabolism; fatty acid biosynthesis. Functionally, catalyzes the condensation reaction of fatty acid synthesis by the addition to an acyl acceptor of two carbons from malonyl-ACP. Catalyzes the first condensation reaction which initiates fatty acid synthesis and may therefore play a role in governing the total rate of fatty acid production. Possesses both acetoacetyl-ACP synthase and acetyl transacylase activities. Its substrate specificity determines the biosynthesis of branched-chain and/or straight-chain of fatty acids. The polypeptide is Beta-ketoacyl-[acyl-carrier-protein] synthase III (Coxiella burnetii (strain Dugway 5J108-111)).